The following is a 667-amino-acid chain: Flavin-dependent halogenase malA (667 aa).

FAD-binding residues include His48, Glu70, Ile79, and Ser82. Lys108 is an active-site residue. 4 residues coordinate FAD: Arg144, Val168, Asp399, and Ile412. Glu494 is a binding site for substrate. Cys597, Cys600, Cys613, and Cys616 together coordinate Zn(2+). Positions 621–646 (TEPQTAVTFDPPLTAEEEALLYAAWN) are flexible region.

The protein belongs to the flavin-dependent halogenase family. The cofactor is Zn(2+).

It carries out the reaction (+)-premalbrancheamide + 2 FAD + 2 chloride + 4 H(+) = (+)-malbrancheamide + 2 FADH2. The enzyme catalyses (+)-premalbrancheamide + FAD + chloride + 2 H(+) = (+)-malbrancheamide B + FADH2. The catalysed reaction is (+)-premalbrancheamide + FAD + chloride + 2 H(+) = (+)-isomalbrancheamide B + FADH2. It catalyses the reaction (+)-malbrancheamide B + FAD + chloride + 2 H(+) = (+)-malbrancheamide + FADH2. It carries out the reaction (+)-isomalbrancheamide B + FAD + chloride + 2 H(+) = (+)-malbrancheamide + FADH2. The enzyme catalyses (+)-premalbrancheamide + bromide + FAD + 2 H(+) = (+)-malbrancheamide C + FADH2. The catalysed reaction is (+)-premalbrancheamide + bromide + FAD + 2 H(+) = (+)-isomalbrancheamide C + FADH2. It catalyses the reaction (+)-malbrancheamide B + bromide + FAD + 2 H(+) = (+)-malbrancheamide D + FADH2. It carries out the reaction (+)-isomalbrancheamide B + bromide + FAD + 2 H(+) = (+)-isomalbrancheamide D + FADH2. It functions in the pathway alkaloid biosynthesis. Its function is as follows. Flavin-dependent halogenase; part of the gene cluster that mediates the biosynthesis of malbrancheamide, a dichlorinated fungal indole alkaloid that belongs to a family of natural products containing a characteristic bicyclo[2.2.2]diazaoctane core. The first step of malbrancheamide biosynthesis involves coupling of L-proline and L-tryptophan by malG, a bimodular NRPS, to produce L-Pro-L-Trp aldehyde through reductive offloading. This compound undergoes spontaneous cyclization and dehydration to give a dienamine which is reverse prenylated at C-2 by malE. The other prenyltransferase present in the cluster, malB, displays modest activity, suggesting that may be a redundant gene in the pathway. Subsequently, a [4+2] Diels-Alder cyclo-addition catalyzed by the bifunctional enzyme malC forms the characteristic bicyclo[2.2.2]diazaoctane ring of premalbrancheamid. Finally, the flavin-dependent halogenase malA catalyzes the iterative dichlorination of the indole ring of premalbrancheamide to yield C-9 monochlorinated malbrancheamide B, C-8 monochlorinated isomalbrancheamide B, and dichlorinated malbrancheamide. MalA is also able to brominate premalbrancheamide at C-9 to yield malbrancheamide C, and, to a lesser extend, at C-8 to yield isomalbrancheamide C. Finally, malA can brominate C-9 monochlorinated malbrancheamide B at C-8 to yield malbrancheamide D, or C-8 monochlorinated isomalbrancheamide B at C-9 to produce isomalbrancheamide D. This Malbranchea aurantiaca protein is Flavin-dependent halogenase malA.